The following is a 125-amino-acid chain: Photosystem II extrinsic protein U (125 aa).

The first 29 residues, 1–29, serve as a signal peptide directing secretion; that stretch reads MKRLLSWLTGLVVIAGLLIGLLVPPSVSA.

This sequence belongs to the PsbU family. PSII is composed of 1 copy each of membrane proteins PsbA, PsbB, PsbC, PsbD, PsbE, PsbF, PsbH, PsbI, PsbJ, PsbK, PsbL, PsbM, PsbT, PsbX, PsbY, PsbZ, Psb30/Ycf12, peripheral proteins PsbO, CyanoQ (PsbQ), PsbU, PsbV and a large number of cofactors. It forms dimeric complexes.

Its subcellular location is the cellular thylakoid membrane. Functionally, one of the extrinsic, lumenal subunits of photosystem II (PSII). PSII is a light-driven water plastoquinone oxidoreductase, using light energy to abstract electrons from H(2)O, generating a proton gradient subsequently used for ATP formation. The extrinsic proteins stabilize the structure of photosystem II oxygen-evolving complex (OEC), the ion environment of oxygen evolution and protect the OEC against heat-induced inactivation. This chain is Photosystem II extrinsic protein U, found in Synechococcus sp. (strain CC9311).